Here is an 884-residue protein sequence, read N- to C-terminus: Protein translocase subunit SecA (884 aa).

ATP is bound by residues Gln-88, 106–110 (GEGKT), and Asp-509. A disordered region spans residues 822–884 (EQKKLKMSGA…PKKGLFANND (63 aa)). A compositionally biased stretch (basic and acidic residues) spans 833–842 (KGGEDLEETK). 4 residues coordinate Zn(2+): Cys-858, Cys-860, Cys-869, and His-870.

Belongs to the SecA family. As to quaternary structure, monomer and homodimer. Part of the essential Sec protein translocation apparatus which comprises SecA, SecYEG and auxiliary proteins SecDF-YajC and YidC. It depends on Zn(2+) as a cofactor.

Its subcellular location is the cell inner membrane. The protein localises to the cytoplasm. The enzyme catalyses ATP + H2O + cellular proteinSide 1 = ADP + phosphate + cellular proteinSide 2.. Functionally, part of the Sec protein translocase complex. Interacts with the SecYEG preprotein conducting channel. Has a central role in coupling the hydrolysis of ATP to the transfer of proteins into and across the cell membrane, serving as an ATP-driven molecular motor driving the stepwise translocation of polypeptide chains across the membrane. The sequence is that of Protein translocase subunit SecA from Campylobacter hominis (strain ATCC BAA-381 / DSM 21671 / CCUG 45161 / LMG 19568 / NCTC 13146 / CH001A).